A 248-amino-acid chain; its full sequence is Superoxide dismutase [Mn] 1 (248 aa).

Positions 1–41 are cleaved as a signal peptide; it reads MQTTFRRILILFVGLLVPLFFACQSNSQVDAAPSAAPQLSA. Mn(2+) is bound by residues H68, H123, D208, and H212.

It belongs to the iron/manganese superoxide dismutase family. In terms of assembly, homodimer. Mn(2+) serves as cofactor.

It carries out the reaction 2 superoxide + 2 H(+) = H2O2 + O2. Destroys superoxide anion radicals which are normally produced within the cells and which are toxic to biological systems. The protein is Superoxide dismutase [Mn] 1 (sodA1) of Leptolyngbya boryana (Plectonema boryanum).